The following is a 92-amino-acid chain: DNA-directed RNA polymerase subunit Rpo11 (92 aa).

This sequence belongs to the archaeal Rpo11/eukaryotic RPB11/RPC19 RNA polymerase subunit family. In terms of assembly, part of the RNA polymerase complex.

The protein resides in the cytoplasm. The catalysed reaction is RNA(n) + a ribonucleoside 5'-triphosphate = RNA(n+1) + diphosphate. Functionally, DNA-dependent RNA polymerase (RNAP) catalyzes the transcription of DNA into RNA using the four ribonucleoside triphosphates as substrates. The polypeptide is DNA-directed RNA polymerase subunit Rpo11 (Halorubrum lacusprofundi (strain ATCC 49239 / DSM 5036 / JCM 8891 / ACAM 34)).